Consider the following 246-residue polypeptide: Breast cancer metastasis-suppressor 1 (246 aa).

Positions 1–57 are disordered; sequence MPVQPPSKDTEEMEAEGDSAAEMNGEEEESEEERSGSQTESEEESSEMDDEDYERRR. Acidic residues-rich tracts occupy residues 11-32 and 40-52; these read EEME…ESEE and ESEE…DDED. Positions 51 to 98 form a coiled coil; sequence EDYERRRSECVSEMLDLEKQFSELKEKLFRERLSQLRLRLEEVGAERA. Glycyl lysine isopeptide (Lys-Gly) (interchain with G-Cter in SUMO2) cross-links involve residues Lys184 and Lys242.

The protein belongs to the BRMS1 family. In terms of assembly, homohexamer (Potential). Interacts with SNX6, HDAC1 and RELA. Interacts with ARID4A. Identified in mSin3A corepressor complexes together with SIN3A, SIN3B, RBBP4, RBBP7, SAP30, SUDS3, ARID4A, HDAC1 and HDAC2. Interacts with SPOP; this recruits the protein to a ubiquitin ligase complex containing SPOP and CUL3. In terms of processing, ubiquitinated by a cullin-RING-based BCR (BTB-CUL3-RBX1) E3 ubiquitin-protein ligase complex containing SPOP, leading to proteasomal degradation. As to expression, expression levels are higher in term placentas than in early placentas. Low levels of expression observed in normal pregnancies and in molar pregnancies.

The protein resides in the nucleus. Its subcellular location is the cytoplasm. Transcriptional repressor. Down-regulates transcription activation by NF-kappa-B by promoting the deacetylation of RELA at 'Lys-310'. Promotes HDAC1 binding to promoter regions. Down-regulates expression of anti-apoptotic genes that are controlled by NF-kappa-B. Promotes apoptosis in cells that have inadequate adherence to a substrate, a process called anoikis, and may thereby inhibit metastasis. May be a mediator of metastasis suppression in breast carcinoma. This Homo sapiens (Human) protein is Breast cancer metastasis-suppressor 1 (BRMS1).